Consider the following 98-residue polypeptide: Peptide YY (98 aa).

The N-terminal stretch at 1–28 is a signal peptide; sequence MVAVRRPWPVMVAMLLVLLACLGALVDA. Serine 41 is subject to Phosphoserine. Position 64 is a tyrosine amide (tyrosine 64). A propeptide spanning residues 68 to 98 is cleaved from the precursor; the sequence is EVPAALFSKLLFTDDSENLPFRSRPEGVDQW.

This sequence belongs to the NPY family. The peptide YY form is cleaved at Pro-30 by the prolyl endopeptidase FAP (seprase) activity (in vitro) to generate peptide YY(3-36).

The protein resides in the secreted. Its function is as follows. This gut peptide inhibits exocrine pancreatic secretion, has a vasoconstrictory action and inhibitis jejunal and colonic mobility. The sequence is that of Peptide YY (Pyy) from Rattus norvegicus (Rat).